Here is a 1177-residue protein sequence, read N- to C-terminus: Lon protease homolog, mitochondrial (1177 aa).

Disordered stretches follow at residues 72 to 197 and 353 to 386; these read RTNS…KSPA and AKKA…DSST. Positions 103 to 150 are enriched in basic and acidic residues; the sequence is RGRELWVQEKDKSDKPEKSDKPDKTDKTDKDKPEKQDKDKTDKPEKTK. Residues 154–182 are compositionally biased toward low complexity; it reads TPSSTASTGAGEAAAPPSAPPSGSGSSSS. The Lon N-terminal domain occupies 203 to 505; it reads ILAVPISDRP…RALILLKREH (303 aa). The segment covering 353 to 383 has biased composition (basic and acidic residues); sequence AKKAKSGKTEDSKHDSKVTSKDGKETTEKYD. An ATP-binding site is contributed by 657-664; the sequence is GPPGVGKT. The span at 883-916 shows a compositional bias: basic and acidic residues; sequence EKDKESAEKKTTKSKSKEVNEEPAAKEEKDKATE. The interval 883–932 is disordered; the sequence is EKDKESAEKKTTKSKSKEVNEEPAAKEEKDKATESAESSETKVGTKAPPV. The Lon proteolytic domain maps to 964–1150; sequence DPPPGVVMGL…QDVYDVVFQG (187 aa). Catalysis depends on residues Ser-1056 and Lys-1099.

The protein belongs to the peptidase S16 family. Homohexamer or homoheptamer. Organized in a ring with a central cavity.

The protein resides in the mitochondrion matrix. The catalysed reaction is Hydrolysis of proteins in presence of ATP.. In terms of biological role, ATP-dependent serine protease that mediates the selective degradation of misfolded, unassembled or oxidatively damaged polypeptides as well as certain short-lived regulatory proteins in the mitochondrial matrix. May also have a chaperone function in the assembly of inner membrane protein complexes. Participates in the regulation of mitochondrial gene expression and in the maintenance of the integrity of the mitochondrial genome. Binds to mitochondrial DNA in a site-specific manner. The polypeptide is Lon protease homolog, mitochondrial (Yarrowia lipolytica (strain CLIB 122 / E 150) (Yeast)).